Consider the following 209-residue polypeptide: Redox-sensing transcriptional repressor Rex (209 aa).

Residues 16-55 (LYYRFIQNLSLSGKQRVSSAELSEAVKVDSATIRRDFSYF) constitute a DNA-binding region (H-T-H motif). Residue 90–95 (GVGNLG) coordinates NAD(+).

This sequence belongs to the transcriptional regulatory Rex family. As to quaternary structure, homodimer.

Its subcellular location is the cytoplasm. Functionally, modulates transcription in response to changes in cellular NADH/NAD(+) redox state. This is Redox-sensing transcriptional repressor Rex from Bacillus cereus (strain Q1).